The following is a 235-amino-acid chain: Small ribosomal subunit protein uS2c (235 aa).

Belongs to the universal ribosomal protein uS2 family.

Its subcellular location is the plastid. The protein resides in the chloroplast. In Anthoceros angustus (Hornwort), this protein is Small ribosomal subunit protein uS2c (rps2).